The following is a 497-amino-acid chain: Transcription termination/antitermination protein NusA (497 aa).

In terms of domain architecture, S1 motif spans 135 to 200; that stretch reads GKILTGIVKK…RGAQLFVTRS (66 aa). Residues 302–372 enclose the KH domain; sequence RHTIDIAVDS…LKIDQKISNI (71 aa). 2 repeat units span residues 364 to 414 and 439 to 489. Residues 364 to 489 are 2 X 51 AA approximate repeats; it reads KIDQKISNIL…MLIMAARNIC (126 aa).

It belongs to the NusA family. As to quaternary structure, monomer. Binds directly to the core enzyme of the DNA-dependent RNA polymerase and to nascent RNA.

The protein resides in the cytoplasm. Participates in both transcription termination and antitermination. The chain is Transcription termination/antitermination protein NusA from Buchnera aphidicola subsp. Baizongia pistaciae (strain Bp).